Consider the following 334-residue polypeptide: DNA-directed RNA polymerase subunit alpha (334 aa).

An alpha N-terminal domain (alpha-NTD) region spans residues 1-232; the sequence is MVREEIAVST…IDLFIPFLHA (232 aa). Residues 268-334 form an alpha C-terminal domain (alpha-CTD) region; it reads GIALKCIFID…ILQKHFTIDC (67 aa).

This sequence belongs to the RNA polymerase alpha chain family. As to quaternary structure, in plastids the minimal PEP RNA polymerase catalytic core is composed of four subunits: alpha, beta, beta', and beta''. When a (nuclear-encoded) sigma factor is associated with the core the holoenzyme is formed, which can initiate transcription.

It is found in the plastid. The protein resides in the chloroplast. The catalysed reaction is RNA(n) + a ribonucleoside 5'-triphosphate = RNA(n+1) + diphosphate. DNA-dependent RNA polymerase catalyzes the transcription of DNA into RNA using the four ribonucleoside triphosphates as substrates. This Chloranthus spicatus (Chulantree) protein is DNA-directed RNA polymerase subunit alpha.